A 410-amino-acid chain; its full sequence is O-methyltransferase afvC (410 aa).

Residues 253-254 (GG), Asp278, 299-300 (DF), and Arg315 contribute to the S-adenosyl-L-methionine site. Residue His319 is the Proton acceptor of the active site.

The protein belongs to the class I-like SAM-binding methyltransferase superfamily. Cation-independent O-methyltransferase family. COMT subfamily.

It functions in the pathway secondary metabolite biosynthesis. Functionally, O-methyltransferase; part of the gene cluster that mediates the biosynthesis of aflavarin, a bicoumarin that exhibits anti-insectan activity against the fungivorous beetle C.hemipterus. The protein is O-methyltransferase afvC of Aspergillus flavus (strain ATCC 200026 / FGSC A1120 / IAM 13836 / NRRL 3357 / JCM 12722 / SRRC 167).